The primary structure comprises 204 residues: Probable nicotinate-nucleotide adenylyltransferase (204 aa).

The protein belongs to the NadD family.

It carries out the reaction nicotinate beta-D-ribonucleotide + ATP + H(+) = deamido-NAD(+) + diphosphate. It participates in cofactor biosynthesis; NAD(+) biosynthesis; deamido-NAD(+) from nicotinate D-ribonucleotide: step 1/1. Catalyzes the reversible adenylation of nicotinate mononucleotide (NaMN) to nicotinic acid adenine dinucleotide (NaAD). This chain is Probable nicotinate-nucleotide adenylyltransferase, found in Mycobacterium sp. (strain JLS).